The sequence spans 155 residues: Ribonuclease H (155 aa).

In terms of domain architecture, RNase H type-1 spans 1-142 (MLKQVEIFTD…CDVLARDAAS (142 aa)). The Mg(2+) site is built by Asp10, Glu48, Asp70, and Asp134.

The protein belongs to the RNase H family. In terms of assembly, monomer. Mg(2+) is required as a cofactor.

It is found in the cytoplasm. The catalysed reaction is Endonucleolytic cleavage to 5'-phosphomonoester.. Endonuclease that specifically degrades the RNA of RNA-DNA hybrids. The sequence is that of Ribonuclease H from Serratia proteamaculans (strain 568).